We begin with the raw amino-acid sequence, 178 residues long: tRNA (cytidine(56)-2'-O)-methyltransferase (178 aa).

Position 88 (L88) interacts with S-adenosyl-L-methionine.

This sequence belongs to the aTrm56 family. As to quaternary structure, homodimer.

It localises to the cytoplasm. It carries out the reaction cytidine(56) in tRNA + S-adenosyl-L-methionine = 2'-O-methylcytidine(56) in tRNA + S-adenosyl-L-homocysteine + H(+). Specifically catalyzes the AdoMet-dependent 2'-O-ribose methylation of cytidine at position 56 in tRNAs. This is tRNA (cytidine(56)-2'-O)-methyltransferase from Methanopyrus kandleri (strain AV19 / DSM 6324 / JCM 9639 / NBRC 100938).